Consider the following 680-residue polypeptide: DNA-directed RNA polymerase subunit beta' (680 aa).

Zn(2+)-binding residues include Cys69, Cys71, Cys87, and Cys90. Mg(2+)-binding residues include Asp489, Asp491, and Asp493.

This sequence belongs to the RNA polymerase beta' chain family. RpoC1 subfamily. In terms of assembly, in plastids the minimal PEP RNA polymerase catalytic core is composed of four subunits: alpha, beta, beta', and beta''. When a (nuclear-encoded) sigma factor is associated with the core the holoenzyme is formed, which can initiate transcription. It depends on Mg(2+) as a cofactor. Zn(2+) is required as a cofactor.

It is found in the plastid. Its subcellular location is the chloroplast. It carries out the reaction RNA(n) + a ribonucleoside 5'-triphosphate = RNA(n+1) + diphosphate. Its function is as follows. DNA-dependent RNA polymerase catalyzes the transcription of DNA into RNA using the four ribonucleoside triphosphates as substrates. The polypeptide is DNA-directed RNA polymerase subunit beta' (Cucumis sativus (Cucumber)).